The following is a 440-amino-acid chain: COP9 signalosome complex subunit 5 (440 aa).

The MPN domain occupies 71 to 218 (VLISKLSCEK…MGAFRTIESK (148 aa)). His-164, His-166, and Asp-177 together coordinate Zn(2+). The JAMM motif motif lies at 164–177 (HSHPGYDCWLSNID). Residues 319–341 (TQRGDSTETSSFGSMFSGDNTSD) show a composition bias toward polar residues. Disordered regions lie at residues 319–343 (TQRGDSTETSSFGSMFSGDNTSDVD) and 376–400 (SRSTDNFHNSKKRMNSNQEKCHDEG).

The protein belongs to the peptidase M67A family. CSN5 subfamily. Component of a COP9 signalosome-like (CSN) complex, composed of at least RRI1/CSN5, CSN9, RRI2/CSN10, PCI8/CSN11, CSN12 and CSI1. Within this complex it probably interacts directly with CSN12. Also interacts with RPN5. It depends on a divalent metal cation as a cofactor.

It localises to the cytoplasm. The protein resides in the nucleus. Its function is as follows. Catalytic component of the COP9 signalosome (CSN) complex that acts as an regulator of the ubiquitin (Ubl) conjugation pathway by mediating the deneddylation of the cullin subunit of SCF-type E3 ubiquitin-protein ligase complexes. The CSN complex is involved in the regulation of the mating pheromone response. The chain is COP9 signalosome complex subunit 5 (RRI1) from Saccharomyces cerevisiae (strain YJM789) (Baker's yeast).